The sequence spans 559 residues: 5'-AMP-activated protein kinase catalytic subunit alpha-1 (559 aa).

In terms of domain architecture, Protein kinase spans 27–279 (YILGDTLGVG…IKDIREHEWF (253 aa)). Position 32 is a phosphothreonine (threonine 32). Residues 33–41 (LGVGTFGKV) and lysine 56 each bind ATP. The Proton acceptor role is filled by aspartate 150. Threonine 183 bears the Phosphothreonine; by LKB1 and CaMKK2 mark. Residues threonine 269 and threonine 355 each carry the phosphothreonine modification. Positions 302–381 (EALKEVCEKF…PERVPFLVAE (80 aa)) are AIS. Serine 356 is subject to Phosphoserine. Phosphoserine; by ULK1 is present on serine 360. Threonine 368 carries the post-translational modification Phosphothreonine; by ULK1. Position 382 is a phosphothreonine (threonine 382). Phosphoserine; by ULK1 is present on serine 397. Phosphoserine is present on residues serine 467 and serine 486. Residues 484 to 536 (AKSGTATPQRSGSISNYRSCQRSDSDAEAQGKPSEVSLTSSVTSLDSSPVDVA) form a disordered region. Polar residues predominate over residues 485–505 (KSGTATPQRSGSISNYRSCQR). Serine 486 bears the Phosphoserine; by ULK1 mark. At threonine 488 the chain carries Phosphothreonine; by ULK1. Threonine 490 is subject to Phosphothreonine. Serine 496, serine 508, serine 524, and serine 527 each carry phosphoserine. Positions 516–535 (PSEVSLTSSVTSLDSSPVDV) are enriched in low complexity.

This sequence belongs to the protein kinase superfamily. CAMK Ser/Thr protein kinase family. SNF1 subfamily. AMPK is a heterotrimer of an alpha catalytic subunit (PRKAA1 or PRKAA2), a beta (PRKAB1 or PRKAB2) and a gamma non-catalytic subunits (PRKAG1, PRKAG2 or PRKAG3). Interacts with FNIP1 and FNIP2. It depends on Mg(2+) as a cofactor. In terms of processing, ubiquitinated. Phosphorylated at Thr-183 by STK11/LKB1 in complex with STE20-related adapter-alpha (STRADA) pseudo kinase and CAB39. Also phosphorylated at Thr-183 by CAMKK2; triggered by a rise in intracellular calcium ions, without detectable changes in the AMP/ATP ratio. CAMKK1 can also phosphorylate Thr-183, but at a much lower level. Dephosphorylated by protein phosphatase 2A and 2C (PP2A and PP2C). Phosphorylated by ULK1 and ULK2; leading to negatively regulate AMPK activity and suggesting the existence of a regulatory feedback loop between ULK1, ULK2 and AMPK. There is some ambiguity for some phosphosites: Ser-360/Thr-368 and Ser-486/Thr-488. Dephosphorylated by PPM1A and PPM1B. Post-translationally, glycosylated; O-GlcNAcylated by OGT, promoting the AMP-activated protein kinase (AMPK) activity. In terms of tissue distribution, low expression in kidney, liver, lung, heart and brain.

It localises to the cytoplasm. The protein resides in the nucleus. It catalyses the reaction L-seryl-[protein] + ATP = O-phospho-L-seryl-[protein] + ADP + H(+). The enzyme catalyses L-threonyl-[protein] + ATP = O-phospho-L-threonyl-[protein] + ADP + H(+). It carries out the reaction L-seryl-[acetyl-CoA carboxylase] + ATP = O-phospho-L-seryl-[acetyl-CoA carboxylase] + ADP + H(+). The catalysed reaction is L-seryl-[3-hydroxy-3-methylglutaryl-coenzyme A reductase] + ATP = O-phospho-L-seryl-[3-hydroxy-3-methylglutaryl-coenzyme A reductase] + ADP + H(+). It catalyses the reaction L-seryl-[tau protein] + ATP = O-phospho-L-seryl-[tau protein] + ADP + H(+). The enzyme catalyses L-threonyl-[tau protein] + ATP = O-phospho-L-threonyl-[tau protein] + ADP + H(+). With respect to regulation, activated by phosphorylation on Thr-183. Binding of AMP to non-catalytic gamma subunit (PRKAG1, PRKAG2 or PRKAG3) results in allosteric activation, inducing phosphorylation on Thr-183. AMP-binding to gamma subunit also sustains activity by preventing dephosphorylation of Thr-183. ADP also stimulates Thr-183 phosphorylation, without stimulating already phosphorylated AMPK. ATP promotes dephosphorylation of Thr-183, rendering the enzyme inactive. Under physiological conditions AMPK mainly exists in its inactive form in complex with ATP, which is much more abundant than AMP. Selectively inhibited by compound C (6-[4-(2-Piperidin-1-yl-ethoxy)-phenyl)]-3-pyridin-4-yl-pyyrazolo[1,5-a] pyrimidine. Activated by resveratrol, a natural polyphenol present in red wine, and S17834, a synthetic polyphenol. Catalytic subunit of AMP-activated protein kinase (AMPK), an energy sensor protein kinase that plays a key role in regulating cellular energy metabolism. In response to reduction of intracellular ATP levels, AMPK activates energy-producing pathways and inhibits energy-consuming processes: inhibits protein, carbohydrate and lipid biosynthesis, as well as cell growth and proliferation. AMPK acts via direct phosphorylation of metabolic enzymes, and by longer-term effects via phosphorylation of transcription regulators. Regulates lipid synthesis by phosphorylating and inactivating lipid metabolic enzymes such as ACACA, ACACB, GYS1, HMGCR and LIPE; regulates fatty acid and cholesterol synthesis by phosphorylating acetyl-CoA carboxylase (ACACA and ACACB) and hormone-sensitive lipase (LIPE) enzymes, respectively. Promotes lipolysis of lipid droplets by mediating phosphorylation of isoform 1 of CHKA (CHKalpha2). Regulates insulin-signaling and glycolysis by phosphorylating IRS1, PFKFB2 and PFKFB3. AMPK stimulates glucose uptake in muscle by increasing the translocation of the glucose transporter SLC2A4/GLUT4 to the plasma membrane, possibly by mediating phosphorylation of TBC1D4/AS160. Regulates transcription and chromatin structure by phosphorylating transcription regulators involved in energy metabolism such as CRTC2/TORC2, FOXO3, histone H2B, HDAC5, MEF2C, MLXIPL/ChREBP, EP300, HNF4A, p53/TP53, SREBF1, SREBF2 and PPARGC1A. Acts as a key regulator of glucose homeostasis in liver by phosphorylating CRTC2/TORC2, leading to CRTC2/TORC2 sequestration in the cytoplasm. In response to stress, phosphorylates 'Ser-36' of histone H2B (H2BS36ph), leading to promote transcription. Acts as a key regulator of cell growth and proliferation by phosphorylating FNIP1, TSC2, RPTOR, WDR24 and ATG1/ULK1: in response to nutrient limitation, negatively regulates the mTORC1 complex by phosphorylating RPTOR component of the mTORC1 complex and by phosphorylating and activating TSC2. Also phosphorylates and inhibits GATOR2 subunit WDR24 in response to nutrient limitation, leading to suppress glucose-mediated mTORC1 activation. In response to energetic stress, phosphorylates FNIP1, inactivating the non-canonical mTORC1 signaling, thereby promoting nuclear translocation of TFEB and TFE3, and inducing transcription of lysosomal or autophagy genes. In response to nutrient limitation, promotes autophagy by phosphorylating and activating ATG1/ULK1. In that process, it also activates WDR45/WIPI4. Phosphorylates CASP6, thereby preventing its autoprocessing and subsequent activation. In response to nutrient limitation, phosphorylates transcription factor FOXO3 promoting FOXO3 mitochondrial import. Also acts as a regulator of cellular polarity by remodeling the actin cytoskeleton; probably by indirectly activating myosin. AMPK also acts as a regulator of circadian rhythm by mediating phosphorylation of CRY1, leading to destabilize it. May regulate the Wnt signaling pathway by phosphorylating CTNNB1, leading to stabilize it. Also has tau-protein kinase activity: in response to amyloid beta A4 protein (APP) exposure, activated by CAMKK2, leading to phosphorylation of MAPT/TAU; however the relevance of such data remains unclear in vivo. Also phosphorylates CFTR, EEF2K, KLC1, NOS3 and SLC12A1. Regulates hepatic lipogenesis. Activated via SIRT3, represses sterol regulatory element-binding protein (SREBP) transcriptional activities and ATP-consuming lipogenesis to restore cellular energy balance. Upon stress, regulates mitochondrial fragmentation through phosphorylation of MTFR1L. The protein is 5'-AMP-activated protein kinase catalytic subunit alpha-1 (Prkaa1) of Rattus norvegicus (Rat).